We begin with the raw amino-acid sequence, 119 residues long: Beta-2-microglobulin (119 aa).

Positions M1–T20 are cleaved as a signal peptide. The Ig-like C1-type domain maps to P25 to K114. An intrachain disulfide couples C45 to C100.

The protein belongs to the beta-2-microglobulin family. Heterodimer of an alpha chain and a beta chain. Beta-2-microglobulin is the beta-chain of major histocompatibility complex class I molecules.

The protein resides in the secreted. In terms of biological role, component of the class I major histocompatibility complex (MHC). Involved in the presentation of peptide antigens to the immune system. The chain is Beta-2-microglobulin (B2M) from Callicebus personatus personatus (Masked titi).